The following is a 145-amino-acid chain: VHLTDQEIKYINAIWSKVDYKQVGGEALARLLIVYPWTQRYFSTFGNLASADAISHNSKVIAHGEKVLRSIGEALKHLDNLKGYAKLSQYHSEKLHVDPANFVRFGGVVVIVLAHHFHEEFTPEVQAAFEKAFGGVADAVGKGYH.

The region spanning 2–145 (HLTDQEIKYI…VADAVGKGYH (144 aa)) is the Globin domain. The heme b site is built by H63 and H91.

It belongs to the globin family. Red blood cells.

The polypeptide is Hemoglobin subunit beta-2 (Telmatobius peruvianus (Andean frog)).